We begin with the raw amino-acid sequence, 123 residues long: UPF0102 protein CLJ_B2665 (123 aa).

It belongs to the UPF0102 family.

The sequence is that of UPF0102 protein CLJ_B2665 from Clostridium botulinum (strain 657 / Type Ba4).